We begin with the raw amino-acid sequence, 601 residues long: Probable inactive receptor kinase At1g27190 (601 aa).

An N-terminal signal peptide occupies residues M1–A24. N52 is a glycosylation site (N-linked (GlcNAc...) asparagine). LRR repeat units follow at residues R73 to C95, S97 to W119, Y122 to C144, F146 to D169, and R170 to F192. A helical transmembrane segment spans residues I221–F241. A Phosphothreonine modification is found at T298. Residues F301 to S586 form the Protein kinase domain. ATP-binding positions include D307–S315 and K329. S383 carries the phosphoserine modification. At T399 the chain carries Phosphothreonine. The residue at position 476 (Y476) is a Phosphotyrosine. A Phosphoserine modification is found at S478. A Phosphothreonine modification is found at T479. S483 and S586 each carry phosphoserine.

The protein belongs to the protein kinase superfamily. Ser/Thr protein kinase family.

Its subcellular location is the membrane. This Arabidopsis thaliana (Mouse-ear cress) protein is Probable inactive receptor kinase At1g27190.